A 452-amino-acid polypeptide reads, in one-letter code: MNYTQQLKQKDSEYVWHPFTQMGVYSKEEAIIIEKGKGSYLYDTNGNKYLDGYASLWVNVHGHNNKYLNKVIKKQLNKIAHSTLLGSSNIPSIELAEKLIEITPSNLRKVFYSDTGSASVEIAIKMAYQYWKNIDREKYAKKNKFITLNHGYHGDTIGAVSVGGIKTFHKIFKDLIFENIQVESPSFYRSNYDTENEMMTAILTNIEQILIERNDEIAGFILEPLIQGATGLFVHPKGFLKEVEKLCKKYDVLLICDEVAVGFGRTGKMFACNHEDVQPDIMCLGKAITGGYLPLAATLTSKKIYNAFLSDSHGVNTFFHGHTYTGNQIVCTVALENIRLYEKRKLLSHIETTSSTLEKQLHALKRHRNVGDVRGRGLMFGVELVTDKDSKTPLEIEKVERIVRNCKENGLMIRNLENVITFVPVLSMSNKEVKTMVRIFKKAVHNILDRKC.

G116–S117 is a pyridoxal 5'-phosphate binding site. Y152 is a substrate binding site. D257 is a binding site for pyridoxal 5'-phosphate. Positions 286, 321, and 414 each coordinate substrate. K286 carries the post-translational modification N6-(pyridoxal phosphate)lysine.

This sequence belongs to the class-III pyridoxal-phosphate-dependent aminotransferase family. BioA subfamily. As to quaternary structure, homodimer. The cofactor is pyridoxal 5'-phosphate.

The protein localises to the cytoplasm. The catalysed reaction is (8S)-8-amino-7-oxononanoate + S-adenosyl-L-methionine = S-adenosyl-4-methylsulfanyl-2-oxobutanoate + (7R,8S)-7,8-diammoniononanoate. It participates in cofactor biosynthesis; biotin biosynthesis; 7,8-diaminononanoate from 8-amino-7-oxononanoate (SAM route): step 1/1. Its function is as follows. Catalyzes the transfer of the alpha-amino group from S-adenosyl-L-methionine (SAM) to 7-keto-8-aminopelargonic acid (KAPA) to form 7,8-diaminopelargonic acid (DAPA). It is the only aminotransferase known to utilize SAM as an amino donor. The protein is Adenosylmethionine-8-amino-7-oxononanoate aminotransferase of Staphylococcus aureus (strain NCTC 8325 / PS 47).